A 212-amino-acid polypeptide reads, in one-letter code: Ribonuclease HII (212 aa).

The 204-residue stretch at 1–204 (MRVGIDEAGR…LRSTAPLYYI (204 aa)) folds into the RNase H type-2 domain. A divalent metal cation-binding residues include D6, E7, and D103.

Belongs to the RNase HII family. It depends on Mn(2+) as a cofactor. The cofactor is Mg(2+).

The protein resides in the cytoplasm. It catalyses the reaction Endonucleolytic cleavage to 5'-phosphomonoester.. Functionally, endonuclease that specifically degrades the RNA of RNA-DNA hybrids. This chain is Ribonuclease HII, found in Saccharolobus solfataricus (strain ATCC 35092 / DSM 1617 / JCM 11322 / P2) (Sulfolobus solfataricus).